Consider the following 341-residue polypeptide: Aromatic amino acid aminotransferase (341 aa).

Lys-213 bears the N6-(pyridoxal phosphate)lysine mark.

The protein belongs to the class-II pyridoxal-phosphate-dependent aminotransferase family. In terms of assembly, homodimer. Requires pyridoxal 5'-phosphate as cofactor.

The enzyme catalyses an aromatic L-alpha-amino acid + 2-oxoglutarate = an aromatic oxo-acid + L-glutamate. Functionally, aminotransferase that catalyzes the conversion of aromatic amino acids and 2-oxoglutarate into corresponding aromatic oxo acids and L-glutamate. May catalyze the transamination reaction in phenylalanine biosynthesis. The chain is Aromatic amino acid aminotransferase from Corynebacterium glutamicum (strain ATCC 13032 / DSM 20300 / JCM 1318 / BCRC 11384 / CCUG 27702 / LMG 3730 / NBRC 12168 / NCIMB 10025 / NRRL B-2784 / 534).